The following is a 72-amino-acid chain: Male-specific sperm protein Mst84Dd (72 aa).

Belongs to the MST(3)CGP family. Testis.

This Drosophila melanogaster (Fruit fly) protein is Male-specific sperm protein Mst84Dd (Mst84Dd).